The sequence spans 56 residues: Large ribosomal subunit protein bL33 (56 aa).

Over residues 1–12 the composition is skewed to basic and acidic residues; that stretch reads MASKGGREKIKL. Residues 1-27 form a disordered region; the sequence is MASKGGREKIKLESTAGTGHFYTTNKN.

This sequence belongs to the bacterial ribosomal protein bL33 family.

The protein is Large ribosomal subunit protein bL33 of Leptothrix cholodnii (strain ATCC 51168 / LMG 8142 / SP-6) (Leptothrix discophora (strain SP-6)).